The sequence spans 391 residues: Formate-dependent phosphoribosylglycinamide formyltransferase (391 aa).

Residues 20-21 (EL) and Glu-80 each bind N(1)-(5-phospho-beta-D-ribosyl)glycinamide. Residues Arg-112, Lys-153, 158 to 163 (SSGKGQ), 193 to 196 (EGFI), and Glu-201 contribute to the ATP site. The ATP-grasp domain maps to 117 to 306 (RLAAETLGLP…EFALHVRAIL (190 aa)). Residues Glu-265 and Glu-277 each contribute to the Mg(2+) site. N(1)-(5-phospho-beta-D-ribosyl)glycinamide is bound by residues Asp-284, Lys-354, and 361–362 (RR).

The protein belongs to the PurK/PurT family. As to quaternary structure, homodimer.

The enzyme catalyses N(1)-(5-phospho-beta-D-ribosyl)glycinamide + formate + ATP = N(2)-formyl-N(1)-(5-phospho-beta-D-ribosyl)glycinamide + ADP + phosphate + H(+). It functions in the pathway purine metabolism; IMP biosynthesis via de novo pathway; N(2)-formyl-N(1)-(5-phospho-D-ribosyl)glycinamide from N(1)-(5-phospho-D-ribosyl)glycinamide (formate route): step 1/1. In terms of biological role, involved in the de novo purine biosynthesis. Catalyzes the transfer of formate to 5-phospho-ribosyl-glycinamide (GAR), producing 5-phospho-ribosyl-N-formylglycinamide (FGAR). Formate is provided by PurU via hydrolysis of 10-formyl-tetrahydrofolate. In Shewanella oneidensis (strain ATCC 700550 / JCM 31522 / CIP 106686 / LMG 19005 / NCIMB 14063 / MR-1), this protein is Formate-dependent phosphoribosylglycinamide formyltransferase.